Here is a 204-residue protein sequence, read N- to C-terminus: Large ribosomal subunit protein uL4 (204 aa).

Positions Gln49 to Arg72 are disordered.

It belongs to the universal ribosomal protein uL4 family. In terms of assembly, part of the 50S ribosomal subunit.

In terms of biological role, one of the primary rRNA binding proteins, this protein initially binds near the 5'-end of the 23S rRNA. It is important during the early stages of 50S assembly. It makes multiple contacts with different domains of the 23S rRNA in the assembled 50S subunit and ribosome. Functionally, forms part of the polypeptide exit tunnel. The polypeptide is Large ribosomal subunit protein uL4 (Saccharophagus degradans (strain 2-40 / ATCC 43961 / DSM 17024)).